Consider the following 418-residue polypeptide: MTQLPGLLDTEAIRKDFPILDRQVHDGHKLVYLDNAATSQKPRQVLDALSEYYERYNANVHRGVHVLAEEATALYEGARDKVAEFINAPSRDEVIFTKNASESLNLVANMLGWADDPYRVDHETEIVITEMEHHSNIVPWQLLAQRTGAKLRWFGLTDDGRLDLSNIDEVITEKTKVVSFVLVSNILGTQNPVEAIVRRAQEVGALVCIDASQAAPHMPLDVQALQADFVAFTGHKMCGPTGIGVLWGRQELLEDLPPFLGGGEMIETVSMHSSTYAPAPHKFEAGTPPVAQAVGLGAAIDYLNSIGMDKILAHEHALTEYAVKRLLEVPDLRIIGPTTAEERGAAISFTLGDIHPHDVGQVLDEQGIAVRVGHHCARPVCLRYGIPATTRASFYLYSTPAEIDALVDGLEHVRNFFG.

Residue Lys236 is modified to N6-(pyridoxal phosphate)lysine. Cys376 acts as the Cysteine persulfide intermediate in catalysis.

The protein belongs to the class-V pyridoxal-phosphate-dependent aminotransferase family. Csd subfamily. It depends on pyridoxal 5'-phosphate as a cofactor.

The enzyme catalyses (sulfur carrier)-H + L-cysteine = (sulfur carrier)-SH + L-alanine. Catalyzes the removal of elemental sulfur and selenium atoms from L-cysteine, L-cystine, L-selenocysteine, and L-selenocystine to produce L-alanine. This chain is Probable cysteine desulfurase (csd), found in Streptomyces coelicolor (strain ATCC BAA-471 / A3(2) / M145).